Here is a 320-residue protein sequence, read N- to C-terminus: Glucokinase (320 aa).

It belongs to the ROK (NagC/XylR) family. As to quaternary structure, monomer. Requires a divalent metal cation as cofactor.

It catalyses the reaction D-glucose + ATP = D-glucose 6-phosphate + ADP + H(+). Its function is as follows. Catalyzes the phosphorylation of D-glucose to D-glucose 6-phosphate using ATP as the phosphate donor. ITP can also serve as an effective phosphoryl donor. According to Hansen et al., the enzyme has a broad hexose specificity, and in addition to glucose, which shows the highest catalytic efficiency, it can also phosphorylate fructose, mannose, glucosamine, N-acetylglucosamine, N-acetylmannosamine and 2-deoxyglucose. However, according to Sakuraba et al., the enzyme shows strict specificity for D-glucose. The chain is Glucokinase from Aeropyrum pernix (strain ATCC 700893 / DSM 11879 / JCM 9820 / NBRC 100138 / K1).